The primary structure comprises 265 residues: H-2 class II histocompatibility antigen, A beta chain (265 aa).

An N-terminal signal peptide occupies residues 1-27 (MALQIPSLLLSAAVVVLMVLSSPGTEG). Positions 28–122 (GDSERHFVYQ…PETHTSLRRL (95 aa)) are beta-1. Residues 28–226 (GDSERHFVYQ…RAQSESAWSK (199 aa)) lie on the Extracellular side of the membrane. Disulfide bonds link cysteine 42–cysteine 106 and cysteine 145–cysteine 201. An N-linked (GlcNAc...) asparagine glycan is attached at asparagine 46. The interval 123 to 216 (EQPNVVISLS…SLKSPITVEW (94 aa)) is beta-2. The region spanning 125-213 (PNVVISLSRT…EHPSLKSPIT (89 aa)) is the Ig-like C1-type domain. The connecting peptide stretch occupies residues 217-226 (RAQSESAWSK). Residues 227 to 247 (MLSGIGGCVLGVIFLGLGLFI) traverse the membrane as a helical segment. Residues 248 to 265 (RHRSQKGPRGPPPAGLLQ) are Cytoplasmic-facing.

Belongs to the MHC class II family. In terms of processing, ubiquitinated in immature dendritic cells leading to down-regulation of MHC class II.

It localises to the membrane. This chain is H-2 class II histocompatibility antigen, A beta chain (H2-Ab1), found in Mus musculus (Mouse).